A 150-amino-acid chain; its full sequence is uncharacterized protein (150 aa).

This is an uncharacterized protein from Escherichia coli O157:H7.